A 542-amino-acid polypeptide reads, in one-letter code: CTP synthase (542 aa).

The tract at residues 1–265 is amidoligase domain; that stretch reads MTRFIFITGG…DVQVCRHFHL (265 aa). S13 provides a ligand contact to CTP. A UTP-binding site is contributed by S13. Residues 14 to 19 and D71 contribute to the ATP site; that span reads SLGKGL. Residues D71 and E139 each coordinate Mg(2+). Residues 146-148, 186-191, and K222 each bind CTP; these read DIE and KTKPTQ. Residues 186–191 and K222 each bind UTP; that span reads KTKPTQ. Residues 291-541 enclose the Glutamine amidotransferase type-1 domain; it reads TIAVVGKYTS…VQAAITQSRL (251 aa). G353 is a binding site for L-glutamine. C380 serves as the catalytic Nucleophile; for glutamine hydrolysis. L-glutamine is bound by residues 381–384, E404, and R469; that span reads FGMQ. Residues H514 and E516 contribute to the active site.

The protein belongs to the CTP synthase family. As to quaternary structure, homotetramer.

The catalysed reaction is UTP + L-glutamine + ATP + H2O = CTP + L-glutamate + ADP + phosphate + 2 H(+). It catalyses the reaction L-glutamine + H2O = L-glutamate + NH4(+). It carries out the reaction UTP + NH4(+) + ATP = CTP + ADP + phosphate + 2 H(+). The protein operates within pyrimidine metabolism; CTP biosynthesis via de novo pathway; CTP from UDP: step 2/2. Allosterically activated by GTP, when glutamine is the substrate; GTP has no effect on the reaction when ammonia is the substrate. The allosteric effector GTP functions by stabilizing the protein conformation that binds the tetrahedral intermediate(s) formed during glutamine hydrolysis. Inhibited by the product CTP, via allosteric rather than competitive inhibition. In terms of biological role, catalyzes the ATP-dependent amination of UTP to CTP with either L-glutamine or ammonia as the source of nitrogen. Regulates intracellular CTP levels through interactions with the four ribonucleotide triphosphates. The protein is CTP synthase of Rhodospirillum rubrum (strain ATCC 11170 / ATH 1.1.1 / DSM 467 / LMG 4362 / NCIMB 8255 / S1).